Reading from the N-terminus, the 61-residue chain is Metallothionein-2 (61 aa).

Met-1 carries the N-acetylmethionine modification. A beta region spans residues 1-29 (MDPNCSCASDGSCSCAGACKCKQCKCTSC). Residues Cys-5, Cys-7, Cys-13, Cys-15, Cys-19, Cys-21, Cys-24, Cys-26, Cys-29, Cys-33, Cys-34, Cys-36, Cys-37, Cys-41, Cys-44, Cys-48, Cys-50, and Cys-57 each coordinate a divalent metal cation. Residues 30-61 (KKSCCSCCPVGCAKCSQGCICKEASDKCSCCA) form an alpha region. Residue Ser-58 is modified to Phosphoserine. The a divalent metal cation site is built by Cys-59 and Cys-60.

This sequence belongs to the metallothionein superfamily. Type 1 family.

In terms of biological role, metallothioneins have a high content of cysteine residues that bind various heavy metals; these proteins are transcriptionally regulated by both heavy metals and glucocorticoids. The polypeptide is Metallothionein-2 (Mt2) (Mus musculus (Mouse)).